We begin with the raw amino-acid sequence, 387 residues long: MRVLGLMSGTSADGVDAALAQFHGRPEAPHWDLLNTASVPYPSALKERLIRMAQGEPTRACDVLEMSEAVTEIQAAAAHLCDPEQSASLLGCHGQTMWHRPPVPSGESSRESGRRGASWQMLQAPLLAHLSGRPVIHDFRAADLALGGQGAPLVPMADAALMGRIDGWRGLLNLGGIANITLIPPNAGPDRQHPVLGWDCGPANTLMDLAMTRLSGGQDTFDLDGALAGRGTVCEETLERWLQEPYFLSSPPKSTGREVFGQDDLNRRLQQLAPHSAANQLATLTAFSAAVVAQDLRRLTATGQPQPVELLVAGGGCRNQTLMRQLRRRCLGVRVRPSSDLNLPTQFREALVFALLAWWHQRGHPGNAPAITGAAKATVLGLRVNPA.

9 to 16 provides a ligand contact to ATP; the sequence is GTSADGVD.

The protein belongs to the anhydro-N-acetylmuramic acid kinase family.

The enzyme catalyses 1,6-anhydro-N-acetyl-beta-muramate + ATP + H2O = N-acetyl-D-muramate 6-phosphate + ADP + H(+). It functions in the pathway amino-sugar metabolism; 1,6-anhydro-N-acetylmuramate degradation. It participates in cell wall biogenesis; peptidoglycan recycling. In terms of biological role, catalyzes the specific phosphorylation of 1,6-anhydro-N-acetylmuramic acid (anhMurNAc) with the simultaneous cleavage of the 1,6-anhydro ring, generating MurNAc-6-P. Is required for the utilization of anhMurNAc either imported from the medium or derived from its own cell wall murein, and thus plays a role in cell wall recycling. The chain is Anhydro-N-acetylmuramic acid kinase from Synechococcus sp. (strain WH7803).